A 195-amino-acid chain; its full sequence is 22.0 kDa heat shock protein (195 aa).

An N-terminal signal peptide occupies residues Met1–Thr21. The sHSP domain occupies Arg62–Glu180. N-linked (GlcNAc...) asparagine glycosylation is present at Asn160.

Belongs to the small heat shock protein (HSP20) family. May form oligomeric structures.

Its subcellular location is the endoplasmic reticulum. The polypeptide is 22.0 kDa heat shock protein (HSP22.0) (Arabidopsis thaliana (Mouse-ear cress)).